Reading from the N-terminus, the 133-residue chain is ATP synthase epsilon chain, chloroplastic (133 aa).

This sequence belongs to the ATPase epsilon chain family. As to quaternary structure, F-type ATPases have 2 components, CF(1) - the catalytic core - and CF(0) - the membrane proton channel. CF(1) has five subunits: alpha(3), beta(3), gamma(1), delta(1), epsilon(1). CF(0) has three main subunits: a, b and c.

It localises to the plastid. The protein localises to the chloroplast thylakoid membrane. Produces ATP from ADP in the presence of a proton gradient across the membrane. The sequence is that of ATP synthase epsilon chain, chloroplastic from Nicotiana sylvestris (Wood tobacco).